Consider the following 245-residue polypeptide: Bis(5'-nucleosyl)-tetraphosphatase PrpE [asymmetrical] (245 aa).

The protein belongs to the PrpE family. The cofactor is Ni(2+).

It carries out the reaction P(1),P(4)-bis(5'-guanosyl) tetraphosphate + H2O = GMP + GTP + 2 H(+). Functionally, asymmetrically hydrolyzes Ap4p to yield AMP and ATP. The chain is Bis(5'-nucleosyl)-tetraphosphatase PrpE [asymmetrical] from Anoxybacillus flavithermus (strain DSM 21510 / WK1).